Consider the following 989-residue polypeptide: Phosphoenolpyruvate carboxylase (989 aa).

Catalysis depends on residues His175 and Lys630.

It belongs to the PEPCase type 1 family. Mg(2+) is required as a cofactor.

The enzyme catalyses oxaloacetate + phosphate = phosphoenolpyruvate + hydrogencarbonate. In terms of biological role, forms oxaloacetate, a four-carbon dicarboxylic acid source for the tricarboxylic acid cycle. The chain is Phosphoenolpyruvate carboxylase from Prochlorococcus marinus (strain MIT 9301).